We begin with the raw amino-acid sequence, 195 residues long: Probable DNA-directed RNA polymerase subunit delta (195 aa).

In terms of domain architecture, HTH HARE-type spans 14–81 (FALVEIATAI…GNNEWALRAW (68 aa)). Acidic residues-rich tracts occupy residues 120 to 172 (DDDV…DESI) and 181 to 195 (GGDD…DQEK). Residues 120 to 195 (DDDVIDYNDD…DDLSDGDQEK (76 aa)) are disordered.

Belongs to the RpoE family. In terms of assembly, RNAP is composed of a core of 2 alpha, a beta and a beta' subunits. The core is associated with a delta subunit and one of several sigma factors.

Participates in both the initiation and recycling phases of transcription. In the presence of the delta subunit, RNAP displays an increased specificity of transcription, a decreased affinity for nucleic acids, and an increased efficiency of RNA synthesis because of enhanced recycling. The sequence is that of Probable DNA-directed RNA polymerase subunit delta from Leuconostoc mesenteroides subsp. mesenteroides (strain ATCC 8293 / DSM 20343 / BCRC 11652 / CCM 1803 / JCM 6124 / NCDO 523 / NBRC 100496 / NCIMB 8023 / NCTC 12954 / NRRL B-1118 / 37Y).